The primary structure comprises 144 residues: Large-conductance mechanosensitive channel (144 aa).

Helical transmembrane passes span valine 14–phenylalanine 34 and glycine 81–isoleucine 101.

Belongs to the MscL family. In terms of assembly, homopentamer.

It localises to the cell inner membrane. Channel that opens in response to stretch forces in the membrane lipid bilayer. May participate in the regulation of osmotic pressure changes within the cell. This chain is Large-conductance mechanosensitive channel, found in Bdellovibrio bacteriovorus (strain ATCC 15356 / DSM 50701 / NCIMB 9529 / HD100).